Reading from the N-terminus, the 785-residue chain is Ubiquitin carboxyl-terminal hydrolase 1 (785 aa).

Disordered regions lie at residues 1-21 (MPGV…SKKN) and 33-52 (TKRA…ASEY). A compositionally biased stretch (polar residues) spans 7–16 (SESNGLSRGS). Residues Ser-16, Ser-42, and Ser-67 each carry the phosphoserine modification. The USP domain occupies 81-785 (VGLNNLGNTC…TPYLLFYKKL (705 aa)). The active-site Nucleophile is the Cys-90. Composition is skewed to basic and acidic residues over residues 258 to 275 (EDFK…KSDT) and 286 to 298 (LSKE…ENQR). Residues 258–336 (EDFKEKLPKG…SPRPSQKKSR (79 aa)) form a disordered region. A phosphoserine mark is found at Ser-313 and Ser-475. His-593 serves as the catalytic Proton acceptor. The disordered stretch occupies residues 693–723 (TAFAENRNSETSDTTGTHESDRNKESSDQTG). The span at 708-719 (GTHESDRNKESS) shows a compositional bias: basic and acidic residues. A Phosphoserine modification is found at Ser-768.

This sequence belongs to the peptidase C19 family. Interacts with FANCD2 and PCNA. Interacts with WDR48. Interacts with ATAD5; the interaction regulates USP1-mediated PCNA deubiquitination. In terms of processing, autocatalytic cleavage of USP1 following UV irradiation inactivates it, leading to an increase in ubiquitinated PCNA, recruitment of POLH and translesion synthesis. Post-translationally, ubiquitinated by the CRL2(KLHDC2) complex following autocatalytic cleavage, leading to its degradation: the CRL2(KLHDC2) complex recognizes the diglycine (Gly-Gly) at the C-terminus.

It is found in the nucleus. It catalyses the reaction Thiol-dependent hydrolysis of ester, thioester, amide, peptide and isopeptide bonds formed by the C-terminal Gly of ubiquitin (a 76-residue protein attached to proteins as an intracellular targeting signal).. Its function is as follows. Negative regulator of DNA damage repair which specifically deubiquitinates monoubiquitinated FANCD2. Also involved in PCNA-mediated translesion synthesis (TLS) by deubiquitinating monoubiquitinated PCNA. Has almost no deubiquitinating activity by itself and requires the interaction with WDR48 to have a high activity. In Homo sapiens (Human), this protein is Ubiquitin carboxyl-terminal hydrolase 1 (USP1).